A 347-amino-acid polypeptide reads, in one-letter code: MITLTERQSLILKAIVRDYTEGGNPVGSKSLVQELPIKVSSATIRNEMARLEDLGLIVKTHLSSGRIPSIKGYRYYVDHILKPEKVDGKDLKVIQHSLGGEFHKIDEIVAQSADILSQLTSYTTFTLRPELKDSRLSGFRLVPLGNHQVMAILVTNNGDVENQTFTIPSDITGDELEPVVRFIDDQLVGLPLQDVLRQLTHEIPLKLAQYLQDPDGFLDIFGSVLSKAASERFYVGGKLNLFNYTDQQSPKELQSLYSLLDQTDRLANVIGPPGQRIQVRIGNEITNDLLKNYSLITATYDVDQHGQGVIALLGPTAMPYSRMIGLMGAFQRELARKLLDYYRYFDE.

This sequence belongs to the HrcA family.

In terms of biological role, negative regulator of class I heat shock genes (grpE-dnaK-dnaJ and groELS operons). Prevents heat-shock induction of these operons. In Lactiplantibacillus plantarum (strain ATCC BAA-793 / NCIMB 8826 / WCFS1) (Lactobacillus plantarum), this protein is Heat-inducible transcription repressor HrcA.